The following is a 277-amino-acid chain: Undecaprenyl-diphosphatase (277 aa).

The next 6 helical transmembrane spans lie at 47-67 (FNIIIQLAAILAVVWEFRGKI), 85-105 (VNLLIAFFPAVILGVLFADLI), 108-128 (WLFNPITVALALVVGGVIMLW), 183-203 (AATEFSFFLAMPTMVGAAVYS), 218-238 (VFAVGFVTSFVFAMVAVRALL), and 249-269 (FAWYRIAFGLLILATWQFHLI).

It belongs to the UppP family.

It is found in the cell inner membrane. It catalyses the reaction di-trans,octa-cis-undecaprenyl diphosphate + H2O = di-trans,octa-cis-undecaprenyl phosphate + phosphate + H(+). Catalyzes the dephosphorylation of undecaprenyl diphosphate (UPP). Confers resistance to bacitracin. In Pseudomonas paraeruginosa (strain DSM 24068 / PA7) (Pseudomonas aeruginosa (strain PA7)), this protein is Undecaprenyl-diphosphatase.